The following is a 177-amino-acid chain: Large ribosomal subunit protein uL6 (177 aa).

Belongs to the universal ribosomal protein uL6 family. As to quaternary structure, part of the 50S ribosomal subunit.

This protein binds to the 23S rRNA, and is important in its secondary structure. It is located near the subunit interface in the base of the L7/L12 stalk, and near the tRNA binding site of the peptidyltransferase center. This Bordetella pertussis (strain Tohama I / ATCC BAA-589 / NCTC 13251) protein is Large ribosomal subunit protein uL6.